The sequence spans 239 residues: Superoxide dismutase 1 copper chaperone (239 aa).

Positions 7–70 constitute an HMA domain; sequence FYEATYAVPM…ALRDCGRDAI (64 aa). Cu cation is bound by residues cysteine 18 and cysteine 21. The cysteines at positions 28 and 65 are disulfide-linked. Position 163 (aspartate 163) interacts with Zn(2+). Cysteine 219 and cysteine 221 together coordinate Cu cation.

It belongs to the CCS1 family. Requires Cu(2+) as cofactor.

The protein localises to the cytoplasm. Its function is as follows. Copper chaperone for superoxide dismutase 1 (SOD1). Binds copper ions and delivers them specifically to SOD1. This is Superoxide dismutase 1 copper chaperone (CCS1) from Candida glabrata (strain ATCC 2001 / BCRC 20586 / JCM 3761 / NBRC 0622 / NRRL Y-65 / CBS 138) (Yeast).